A 189-amino-acid polypeptide reads, in one-letter code: Probable nicotinate-nucleotide adenylyltransferase (189 aa).

This sequence belongs to the NadD family.

It carries out the reaction nicotinate beta-D-ribonucleotide + ATP + H(+) = deamido-NAD(+) + diphosphate. The protein operates within cofactor biosynthesis; NAD(+) biosynthesis; deamido-NAD(+) from nicotinate D-ribonucleotide: step 1/1. In terms of biological role, catalyzes the reversible adenylation of nicotinate mononucleotide (NaMN) to nicotinic acid adenine dinucleotide (NaAD). In Hydrogenobaculum sp. (strain Y04AAS1), this protein is Probable nicotinate-nucleotide adenylyltransferase.